Here is a 524-residue protein sequence, read N- to C-terminus: GMP synthase [glutamine-hydrolyzing] (524 aa).

The region spanning 9-207 (RILILDFGSQ…VIHICQCIPN (199 aa)) is the Glutamine amidotransferase type-1 domain. Residue C86 is the Nucleophile of the active site. Active-site residues include H181 and E183. The GMPS ATP-PPase domain maps to 208–399 (WTTKHIIEDS…LGLPADLIYR (192 aa)). 235–241 (SGGVDSA) contacts ATP.

In terms of assembly, homodimer.

It carries out the reaction XMP + L-glutamine + ATP + H2O = GMP + L-glutamate + AMP + diphosphate + 2 H(+). The protein operates within purine metabolism; GMP biosynthesis; GMP from XMP (L-Gln route): step 1/1. Catalyzes the synthesis of GMP from XMP. This Coxiella burnetii (strain CbuK_Q154) (Coxiella burnetii (strain Q154)) protein is GMP synthase [glutamine-hydrolyzing].